The primary structure comprises 272 residues: Potassium channel regulatory protein (272 aa).

A BTB domain is found at 5–106 (ELVTLNVGGK…LLNPYLLQPR (102 aa)).

As to quaternary structure, can form homooligomers. Interacts with KCNA1 (via cytoplasmic N-terminal domain) and KCNA4. Ubiquitous in normal tissues and expressed in some tumor tissues.

Its subcellular location is the endoplasmic reticulum. Its function is as follows. Inhibits potassium fluxes in cells. May regulate Kv1 family channel proteins by retaining a fraction of channels in endomembranes. The polypeptide is Potassium channel regulatory protein (KCNRG) (Homo sapiens (Human)).